The primary structure comprises 201 residues: Adenylyl-sulfate kinase (201 aa).

Position 35-42 (35-42 (GLSGSGKS)) interacts with ATP. Serine 109 serves as the catalytic Phosphoserine intermediate.

It belongs to the APS kinase family.

The catalysed reaction is adenosine 5'-phosphosulfate + ATP = 3'-phosphoadenylyl sulfate + ADP + H(+). It participates in sulfur metabolism; hydrogen sulfide biosynthesis; sulfite from sulfate: step 2/3. In terms of biological role, catalyzes the synthesis of activated sulfate. The protein is Adenylyl-sulfate kinase of Salmonella arizonae (strain ATCC BAA-731 / CDC346-86 / RSK2980).